The primary structure comprises 26 residues: Morintide mO4 (26 aa).

The 26-residue stretch at 1–26 folds into the Chitin-binding type-1 domain; that stretch reads NRLCCSQYGFCGTTSEYCSRVSGCQS. An intrachain disulfide couples C4 to C18.

Seeds (at protein level).

Its function is as follows. Chitin-binding protein which functions in defense against chitin-containing fungal pathogens. In Moringa oleifera (Horseradish tree), this protein is Morintide mO4.